A 339-amino-acid polypeptide reads, in one-letter code: Ferrochelatase (339 aa).

The Fe cation site is built by histidine 202 and glutamate 283.

Belongs to the ferrochelatase family.

Its subcellular location is the cytoplasm. It catalyses the reaction heme b + 2 H(+) = protoporphyrin IX + Fe(2+). The protein operates within porphyrin-containing compound metabolism; protoheme biosynthesis; protoheme from protoporphyrin-IX: step 1/1. Catalyzes the ferrous insertion into protoporphyrin IX. This chain is Ferrochelatase, found in Psychrobacter cryohalolentis (strain ATCC BAA-1226 / DSM 17306 / VKM B-2378 / K5).